Here is an 835-residue protein sequence, read N- to C-terminus: MGYSESRSESVSSKGKTSYGHELETVPLPEKKIYTTWPDMIRHWPKTTLCIVSNEFCERFSYYGMRTVLTFYLLNVLKFTDSQSTIFFNGFTVLCYTTPLLGSIVADGYIGKFWTIFSVSILYAIGQVVLALASTKNFQSSVHPWMDLSGLLIIAFGTGGIKPCVSAFGGDQFELGQERMLSLFFSMFYFSINAGSMISTFISPIFRSQPCLGQDSCYPMAFGIPAILMIVATLVFMGGSFWYKKNPPKDNVFGEVSRLMFRAVGNKMKSGSTPKEHWLLHYLTTHDCALDAKCLELQAEKRNKNLCQKKKFIDDVRSLLRVLVMFLPVPMFWALYDQQGSVWLIQAIQMDCRLSDTLLLLPDQMQTLNAVLILLFIPLFQVIIYPVAAKCVRLTPLRKMVTGGLLASLAFLITGFVQLQVNTTLPTLPEEGEASISFWNQFETDCTITVMSGIHKRVLPHDKYLHEDKKNKSGIYNLFTTKSPAKGNGDWTLTYDLSYDGACGDTSKLEKTVKVTAKSKKIIYVGVGSFGYYQNTANTDKPTDGTGEFSMGIVTVFNSSYGGNFAMCRQNTSDFDVNHPCNPRHPADFYFWETDYNSHTDDRDQNATITGSLSSQPAVTYKQKSVKPGYWQLYYLLNTPKDVDRQTYNKTATLVAPTNYGFHRVKQGGVFIYALTGTYENPKIHELQIVQSNSVSILWQIPQIVVITAAEILFSITGYEFAYSQSAPSMKALVQALWLLTTAAGDSIIVVITILNLFENMAVEFFVYAAAMFVVIAIFALLSIFYYTYNYYTTDEEDGEIGVDDEEEIEDHNPRYSIDNKGFHPDEKDTFDMHF.

A run of 11 helical transmembrane segments spans residues 86–106 (IFFN…SIVA), 113–133 (FWTI…LALA), 150–170 (GLLI…AFGG), 183–203 (LFFS…TFIS), 222–242 (FGIP…GSFW), 325–345 (MFLP…VWLI), 368–388 (LNAV…YPVA), 401–421 (VTGG…QLQV), 697–717 (ILWQ…FSIT), 738–758 (WLLT…LNLF), and 765–785 (FFVY…LSIF). The segment at 814-835 (PRYSIDNKGFHPDEKDTFDMHF) is disordered. The segment covering 821-835 (KGFHPDEKDTFDMHF) has biased composition (basic and acidic residues).

This sequence belongs to the major facilitator superfamily. Proton-dependent oligopeptide transporter (POT/PTR) (TC 2.A.17) family. As to expression, expressed specifically in the intestine.

The protein resides in the apical cell membrane. Functionally, low-affinity peptide transporter that is necessary for proton-dependent uptake of di- or tripeptides, and to a minor extent tetrapeptides, in the intestine. Transport is independent of sodium and chloride ions. Controls the uptake of dietary fatty acids, plays a role in fatty acid synthesis and is responsible for dipeptide-induced acidification of the intestine. Regulates cellular pH differences together with the antiporter protein, nhx-2. Amino acid uptake and absorption levels influence the insulin signaling/daf-2 and let-363/TOR pathways, subsequently affecting the stress response and longevity of the organism. It is required for the uptake of the L-enantiomers of various amino acids, including L-glutamate. In response to the availability of amino acid nutrients, may play a role in promoting reproduction and fertility. The sequence is that of Peptide transporter family 1 from Caenorhabditis elegans.